The primary structure comprises 276 residues: Homeobox-leucine zipper protein HOX22 (276 aa).

A DNA-binding region (homeobox) is located at residues 70-130; it reads AGERKRRFTE…NKRARWRSKQ (61 aa). The leucine-zipper stretch occupies residues 129–173; the sequence is KQLEHDYAALRSKYDALHSRVESLKQEKLALTVQLHELRERLRER. The interval 170–212 is disordered; that stretch reads LREREERSGNGGAATTAASSSSCNGSGSEEVDDDDDKRNAAAG. Over residues 182–197 the composition is skewed to low complexity; sequence AATTAASSSSCNGSGS.

Belongs to the HD-ZIP homeobox family. Class I subfamily. In terms of tissue distribution, expressed in seedlings, roots, stems, leaf sheaths and blades and panicles.

It localises to the nucleus. In terms of biological role, probable transcription factor. This chain is Homeobox-leucine zipper protein HOX22 (HOX22), found in Oryza sativa subsp. japonica (Rice).